Reading from the N-terminus, the 338-residue chain is Large ribosomal subunit protein uL3 (338 aa).

The interval 230–258 is disordered; the sequence is HRKGHRRTGTIGPQAPAVMFTQPRPGQMG.

Belongs to the universal ribosomal protein uL3 family. As to quaternary structure, part of the 50S ribosomal subunit. Forms a cluster with proteins L14 and L24e.

In terms of biological role, one of the primary rRNA binding proteins, it binds directly near the 3'-end of the 23S rRNA, where it nucleates assembly of the 50S subunit. The sequence is that of Large ribosomal subunit protein uL3 from Pyrobaculum aerophilum (strain ATCC 51768 / DSM 7523 / JCM 9630 / CIP 104966 / NBRC 100827 / IM2).